The sequence spans 395 residues: Flap endonuclease 1 (395 aa).

Positions 1 to 104 (MGIKHLYQVI…GELAKRVARK (104 aa)) are N-domain. A Mg(2+)-binding site is contributed by Asp34. The DNA site is built by Arg47 and Arg70. Positions 86, 158, 160, 179, and 181 each coordinate Mg(2+). Positions 122-253 (DIEKFSRRTV…TTALSLIKEH (132 aa)) are I-domain. Position 158 (Glu158) interacts with DNA. The DNA site is built by Gly231 and Asp233. Mg(2+) is bound at residue Asp233. The tract at residues 341–349 (QQSRLEGFF) is interaction with PCNA. Residues 345 to 395 (LEGFFKPVARTEDEKASLKRKHDEKLQQQKKKKKEDAKAKKEAKAKPRGAA) form a disordered region. Basic and acidic residues-rich tracts occupy residues 353–371 (ARTE…EKLQ) and 378–389 (KEDAKAKKEAKA).

This sequence belongs to the XPG/RAD2 endonuclease family. FEN1 subfamily. As to quaternary structure, interacts with PCNA. Three molecules of fen1 bind to one PCNA trimer with each molecule binding to one PCNA monomer. PCNA stimulates the nuclease activity without altering cleavage specificity. It depends on Mg(2+) as a cofactor. Post-translationally, phosphorylated. Phosphorylation upon DNA damage induces relocalization to the nuclear plasma.

The protein resides in the nucleus. The protein localises to the nucleolus. It is found in the nucleoplasm. Its subcellular location is the mitochondrion. Functionally, structure-specific nuclease with 5'-flap endonuclease and 5'-3' exonuclease activities involved in DNA replication and repair. During DNA replication, cleaves the 5'-overhanging flap structure that is generated by displacement synthesis when DNA polymerase encounters the 5'-end of a downstream Okazaki fragment. It enters the flap from the 5'-end and then tracks to cleave the flap base, leaving a nick for ligation. Also involved in the long patch base excision repair (LP-BER) pathway, by cleaving within the apurinic/apyrimidinic (AP) site-terminated flap. Acts as a genome stabilization factor that prevents flaps from equilibrating into structures that lead to duplications and deletions. Also possesses 5'-3' exonuclease activity on nicked or gapped double-stranded DNA, and exhibits RNase H activity. Also involved in replication and repair of rDNA and in repairing mitochondrial DNA. This is Flap endonuclease 1 (fen1) from Penicillium rubens (strain ATCC 28089 / DSM 1075 / NRRL 1951 / Wisconsin 54-1255) (Penicillium chrysogenum).